A 248-amino-acid chain; its full sequence is tRNA (guanine-N(1)-)-methyltransferase (248 aa).

S-adenosyl-L-methionine is bound by residues glycine 117 and 137–142 (LGDFVL).

It belongs to the RNA methyltransferase TrmD family. As to quaternary structure, homodimer.

It localises to the cytoplasm. It catalyses the reaction guanosine(37) in tRNA + S-adenosyl-L-methionine = N(1)-methylguanosine(37) in tRNA + S-adenosyl-L-homocysteine + H(+). Functionally, specifically methylates guanosine-37 in various tRNAs. This chain is tRNA (guanine-N(1)-)-methyltransferase, found in Herminiimonas arsenicoxydans.